A 336-amino-acid chain; its full sequence is Phosphate acyltransferase (336 aa).

It belongs to the PlsX family. Homodimer. Probably interacts with PlsY.

It is found in the cytoplasm. It catalyses the reaction a fatty acyl-[ACP] + phosphate = an acyl phosphate + holo-[ACP]. Its pathway is lipid metabolism; phospholipid metabolism. In terms of biological role, catalyzes the reversible formation of acyl-phosphate (acyl-PO(4)) from acyl-[acyl-carrier-protein] (acyl-ACP). This enzyme utilizes acyl-ACP as fatty acyl donor, but not acyl-CoA. In Pseudomonas paraeruginosa (strain DSM 24068 / PA7) (Pseudomonas aeruginosa (strain PA7)), this protein is Phosphate acyltransferase.